A 165-amino-acid polypeptide reads, in one-letter code: Phosphopantetheine adenylyltransferase (165 aa).

T9 is a substrate binding site. ATP is bound by residues T9–F10 and H17. Substrate is bound by residues K41, L73, and R87. ATP contacts are provided by residues G88–R90, E98, and Y123–T129.

Belongs to the bacterial CoaD family. Homohexamer. Requires Mg(2+) as cofactor.

The protein resides in the cytoplasm. It catalyses the reaction (R)-4'-phosphopantetheine + ATP + H(+) = 3'-dephospho-CoA + diphosphate. It participates in cofactor biosynthesis; coenzyme A biosynthesis; CoA from (R)-pantothenate: step 4/5. In terms of biological role, reversibly transfers an adenylyl group from ATP to 4'-phosphopantetheine, yielding dephospho-CoA (dPCoA) and pyrophosphate. This is Phosphopantetheine adenylyltransferase from Nitrosospira multiformis (strain ATCC 25196 / NCIMB 11849 / C 71).